The sequence spans 393 residues: Protein TsgA (393 aa).

12 helical membrane-spanning segments follow: residues 11 to 31 (WISF…GMVM), 51 to 71 (FLNA…EIIP), 78 to 98 (FGFI…SLAL), 101 to 121 (AAMF…TFLI), 134 to 154 (LLFT…VAAF), 162 to 182 (WYWV…LTFG), 206 to 226 (IGVL…LGFI), 245 to 265 (ALVS…SFIL), 273 to 293 (ILTV…TGTQ), 298 to 318 (WFIL…ITLG), 332 to 352 (FILT…GPIV), and 361 to 381 (LLTA…LGFV).

This sequence belongs to the major facilitator superfamily. TsgA family.

The protein localises to the cell inner membrane. This is Protein TsgA from Salmonella paratyphi B (strain ATCC BAA-1250 / SPB7).